The primary structure comprises 225 residues: Uracil-DNA glycosylase (225 aa).

Asp65 (proton acceptor) is an active-site residue.

It belongs to the uracil-DNA glycosylase (UDG) superfamily. UNG family.

The protein localises to the cytoplasm. It carries out the reaction Hydrolyzes single-stranded DNA or mismatched double-stranded DNA and polynucleotides, releasing free uracil.. Functionally, excises uracil residues from the DNA which can arise as a result of misincorporation of dUMP residues by DNA polymerase or due to deamination of cytosine. The polypeptide is Uracil-DNA glycosylase (Lysinibacillus sphaericus (strain C3-41)).